Here is a 322-residue protein sequence, read N- to C-terminus: Carnosine N-methyltransferase 2 (322 aa).

Glutamate 58 is a substrate binding site. 4 residues coordinate S-adenosyl-L-methionine: glycine 90, glutamate 119, serine 150, and isoleucine 172. Asparagine 313 serves as a coordination point for substrate.

Belongs to the class I-like SAM-binding methyltransferase superfamily. HNMT family. Monomer.

The catalysed reaction is carnosine + S-adenosyl-L-methionine = anserine + S-adenosyl-L-homocysteine + H(+). Its function is as follows. N-methyltransferase that mediates the formation of anserine (beta-alanyl-N(Pi)-methyl-L-histidine) from carnosine. Anserine, a methylated derivative of carnosine (beta-alanyl-L-histidine), is an abundant constituent of vertebrate skeletal muscles. This Gallus gallus (Chicken) protein is Carnosine N-methyltransferase 2.